Reading from the N-terminus, the 748-residue chain is Cysteine--tRNA ligase, cytoplasmic (748 aa).

The segment at 1–25 is disordered; that stretch reads MAGSSGQQGKGRRVQPQWSPPAGTQ. An N-acetylalanine modification is found at A2. S19 is subject to Phosphoserine. C55 is a binding site for Zn(2+). Residue G56 coordinates L-cysteine. Positions 57–67 match the 'HIGH' region motif; it reads PTVYDASHMGH. Residue T96 coordinates L-cysteine. The 'KIIK' region motif lies at 101-104; the sequence is KIIK. 2 positions are modified to phosphoserine: S305 and S307. Zn(2+)-binding residues include C348, H373, and E377. H373 is an L-cysteine binding site. Residues 406–410 carry the 'KMSKS' region motif; it reads KMSKS. Residue K409 coordinates ATP. 2 stretches are compositionally biased toward basic and acidic residues: residues 654–679 and 700–717; these read KRQV…EAAK and KFDE…KELS. Disordered regions lie at residues 654–686 and 700–721; these read KRQV…MKIP and KFDE…KGQA. A Phosphoserine modification is found at S746.

As to quaternary structure, homodimer. It depends on Zn(2+) as a cofactor.

It is found in the cytoplasm. The catalysed reaction is tRNA(Cys) + L-cysteine + ATP = L-cysteinyl-tRNA(Cys) + AMP + diphosphate. Its function is as follows. Catalyzes the ATP-dependent ligation of cysteine to tRNA(Cys). This chain is Cysteine--tRNA ligase, cytoplasmic (CARS1), found in Macaca fascicularis (Crab-eating macaque).